Reading from the N-terminus, the 92-residue chain is Progonadoliberin-1 (92 aa).

Residues 1 to 23 (METIPKLMAAVVLLTVCLEGCSS) form the signal peptide. At Q24 the chain carries Pyrrolidone carboxylic acid. G33 bears the Glycine amide mark.

Belongs to the GnRH family. In terms of processing, the precursor is cleaved by ACE, which removes the Gly-Lys-Arg peptide at the C-terminus, leading to mature hormone. The mature form of Gonadoliberin-1 is also cleaved and degraded by ACE. As to expression, central nervous system.

Its subcellular location is the secreted. Functionally, stimulates the secretion of gonadotropins; it stimulates the secretion of both luteinizing and follicle-stimulating hormones. This is Progonadoliberin-1 (Gnrh1) from Rattus norvegicus (Rat).